Here is a 267-residue protein sequence, read N- to C-terminus: Myb-related protein Hv1 (267 aa).

HTH myb-type domains lie at 9–61 (KAHT…INYL) and 62–116 (RPDL…RRKL). 2 consecutive DNA-binding regions (H-T-H motif) follow at residues 37-61 (WRSL…INYL) and 89-112 (WSLI…NTHI).

As to expression, germinating seed and apical meristem of shoot and root.

It localises to the nucleus. Functionally, possible transcription activator in response to an external signal. May be involved in the regulation of flavonoid biosynthesis. The chain is Myb-related protein Hv1 (MYB1) from Hordeum vulgare (Barley).